We begin with the raw amino-acid sequence, 1171 residues long: MSLRFVIGRAGSGKSTLCLHEVQEELKQRPRGETILYLVPEQMTFQTQQALIGSEDVRGSIRAQVFSFSRLAWKVLQEVGGASRLHIDEAGVHMLLRKIVESRKDGLSVFQKAAEQNGFFEHLGSMIAEFKRYNVTPSNVYEMWQQLDAHSSSAEQKLLANKVYDLQLLYDDFERALIGKYLDSEDYLQLLVEKLPQSEYVKGAEIYIDGFHSFSPQELEIVRQLMICGARVTITLTIDEKTLAQPVNELDLFYETTLTYEKIKQVAREEKIEIEKTIPLMEQPRFHSPALAHLEAHYEARPNEKFNGEASVTIHTAANLRAEVEGVAREIRRLVADENYRYRDIAVLLRNGESYYDVMRTLFTDYNIPHFIDEKRPMSHHPLVECIRSALEIISGNWRYDAVFRCVKTELLYPLDVRKETMREEMDEFENYCLAYGVQGKRWTSEDPWMYRRYRSLDDTDGMITDSEREMEEKINRLRGVVRTPVIRMQKRLKRAGTVMQMCEAVYLFLEELDVPKKLEALRIRAEESGDFLFATDHEQVWEEVMSLLDTFVEMLGEEKMSLSMFTDVMSTGLEALQFANIPPSLDQVLIANIDRSRLSNVKATFVIGVNEGVIPAAPMDEGMLSDEERDVLSAAGIELAPTTRQTLLEEQFVMYQMVTRATEKLYISCPLADEEGKTLLASSFIKKIKRMFPDVKDTFITNDVNDLSRSEQISYVATPEVTLSYVMQQLQTWKRYGFEGNLDFWWDVYNFYVTSDEWKQKSSRVLSSLFYRNRAQKLSTAVSRDLYGDKIKGSVSRMELFNRCAYAHFAQHGLSLRERDIFKLDAPDIGELFHAALKRIADRLLRENRTWADLSIKECEHLSAVVIEEIAPLLQRQILLSSNRHFYLKQKLQQIIFRTSIILREHAKSSGFVPVDLEVPFGMGGTGSLPPMEFSLPNGVKMEVVGRIDRVDKAEDENGTFLRIIDYKSSSKALDLTEVYYGLALQMLTYLDVVTSNAHTWMKKGGTASPAGVLYFHIHNPIVEVKGDASEAEIEKEILKKFKMKGLVLGDADVVRLMDNKLSTGSSDIISAGLKKDGSFSARSSIASEQEFNVLQKYVHHTFENIGKDITEGVIDIAPYKKGNKAACTFCNFKSVCQFDESLEDNQFRTLKDMKDSEAMEKIREEVGGE.

A UvrD-like helicase ATP-binding domain is found at M1–R343. G8–S15 serves as a coordination point for ATP. A UvrD-like helicase C-terminal domain is found at M281–D587. C805, C1129, C1132, and C1138 together coordinate [4Fe-4S] cluster.

This sequence belongs to the helicase family. AddB/RexB type 1 subfamily. As to quaternary structure, heterodimer of AddA and AddB. The cofactor is Mg(2+). It depends on [4Fe-4S] cluster as a cofactor.

Functionally, the heterodimer acts as both an ATP-dependent DNA helicase and an ATP-dependent, dual-direction single-stranded exonuclease. Recognizes the chi site generating a DNA molecule suitable for the initiation of homologous recombination. The AddB subunit has 5' -&gt; 3' nuclease activity but not helicase activity. The polypeptide is ATP-dependent helicase/deoxyribonuclease subunit B (Bacillus cereus (strain AH187)).